The chain runs to 154 residues: UPF0225 protein Spro_2712 (154 aa).

Belongs to the UPF0225 family.

This is UPF0225 protein Spro_2712 from Serratia proteamaculans (strain 568).